The following is a 1082-amino-acid chain: RhoGEF domain-containing protein gxcI (1082 aa).

Residues 1 to 15 (MRKNSTSNPSPSHQF) show a composition bias toward polar residues. 5 disordered regions span residues 1-29 (MRKN…VNNN), 59-78 (DKNQ…VLPQ), 91-394 (YNEQ…VTSL), 438-488 (KQAS…SVSN), and 504-524 (INSF…SLSL). 5 stretches are compositionally biased toward low complexity: residues 20–29 (KNTTTVVNNN), 62–71 (QQQQQQQQQQ), 96–109 (PSSS…SSSP), 116–160 (LLST…SGSP), and 170–184 (PTIL…RQLP). Positions 185–206 (TRPPSPLPKLPSRPTSPVPPNP) are enriched in pro residues. Residues 211–244 (NTTTTNNNNNNNNNNNNNNNNNNNNNNNNNNNNN) show a composition bias toward low complexity. Over residues 262 to 276 (PIPPPNDKPAPPPRP) the composition is skewed to pro residues. Over residues 282 to 366 (TLTTPPTIAT…NNNNNSNNNK (85 aa)) the composition is skewed to low complexity. The segment covering 367–379 (PLPPTSTKPPRPK) has biased composition (pro residues). A compositionally biased stretch (low complexity) spans 450 to 473 (SSLSLSTTPTSVSPSTPSSANPTP). The DH domain maps to 622-817 (SFNKVIKEII…EKIVNDINGK (196 aa)). A PH-like region spans residues 838-994 (QQLRDQTFLK…NDIDEAINIL (157 aa)). Disordered regions lie at residues 920 to 961 (NNNN…NSTP) and 1017 to 1060 (NNNN…NSNN).

In terms of biological role, GTPase-activating protein. This chain is RhoGEF domain-containing protein gxcI (gxcI), found in Dictyostelium discoideum (Social amoeba).